The sequence spans 476 residues: GTPase Der (476 aa).

EngA-type G domains are found at residues 3 to 167 (FTVA…GEER) and 205 to 380 (LRVA…KVWN). Residues 9–16 (GRPNVGKS), 56–60 (DTAGL), 119–122 (NKSE), 211–218 (GRPNAGKS), 258–262 (DTAGM), and 323–326 (NKWD) contribute to the GTP site. The KH-like domain occupies 381 to 465 (RRISTARLNR…PIRVHFRASE (85 aa)).

It belongs to the TRAFAC class TrmE-Era-EngA-EngB-Septin-like GTPase superfamily. EngA (Der) GTPase family. As to quaternary structure, associates with the 50S ribosomal subunit.

Its function is as follows. GTPase that plays an essential role in the late steps of ribosome biogenesis. In Rhizobium meliloti (strain 1021) (Ensifer meliloti), this protein is GTPase Der.